Here is a 1121-residue protein sequence, read N- to C-terminus: Potassium channel subfamily U member 1 (1121 aa).

Residues 1–24 (MSQTLLDSLNQKELTETSCTIEIQ) are Extracellular-facing. Residues 25–45 (AAFILSSLATFFGGLIILFLF) traverse the membrane as a helical segment. The Cytoplasmic segment spans residues 46-101 (RIALKSSRSWKYVKGPRGLLELFSSRRIEANPLRKLYFHGVFRQRIEMLLSAQTVV). Residues 102-122 (GQVLVILVFVLSIGSLVIYFI) traverse the membrane as a helical segment. At 123–137 (NSMDPVRRCSSYEDK) the chain is on the extracellular side. A helical membrane pass occupies residues 138 to 158 (IVHVDLSFNAFFSFYFGLRFW). Residues 159 to 165 (AAEDKIK) lie on the Cytoplasmic side of the membrane. A helical transmembrane segment spans residues 166 to 186 (FWLEMNSIVDIFTIPPTFISY). Topologically, residues 187–188 (YL) are extracellular. Residues 189-209 (KSNWLGLRFLRALRLLELPKI) form a helical; Voltage-sensor membrane-spanning segment. Residues 210 to 226 (LQILQVIKTSNSVKLSK) are Cytoplasmic-facing. The helical transmembrane segment at 227-247 (LLSIVISTWFTAAGFLHLVEN) threads the bilayer. The Extracellular portion of the chain corresponds to 248–259 (SGDPWLNGRNSQ). The pore-forming intramembrane region spans 260-282 (TMSYFESIYLVTATMSTVGFGDV). A Selectivity for potassium motif is present at residues 276–279 (TVGF). Residues 283-290 (VAKTSLGR) lie on the Extracellular side of the membrane. The helical transmembrane segment at 291-311 (IFIVFFTLGSLILFANYIPEM) threads the bilayer. Residues 312–1121 (VELFSTRKKY…LDASDIVQEK (810 aa)) lie on the Cytoplasmic side of the membrane. RCK N-terminal domains follow at residues 331-473 (KKFI…DNIL) and 718-889 (QNHI…DGML). 2 disordered regions span residues 836–858 (SPTP…KERK) and 1052–1076 (DSSP…GSNF).

Belongs to the potassium channel family. Calcium-activated (TC 1.A.1.3) subfamily. KCa5.1/KCNU1 sub-subfamily. In terms of assembly, homotetramer; which constitutes the calcium-activated potassium channel. Interact with LRRC52; this interaction changes some channel gating properties, such as shifting gating to more negative potentials at a given pH. Testis-specific. Mainly expressed in spermatocytes. In terms of tissue distribution, expressed in testis, brain, eye and kidney.

Its subcellular location is the cell membrane. The protein resides in the cytoplasm. The catalysed reaction is K(+)(in) = K(+)(out). Regulated by changes in cytosolic pH; activated by alkalization. In contrast to human KCNU1 is not activated by Ca(2+) or Mg(2+). The auxiliary subunit LRRC52 shifts the activation of KCNU1 to more negative potentials at a given pH. Testis-specific potassium channel activated by both intracellular pH and membrane voltage that mediates export of K(+). Represents the primary spermatozoan K(+) current. The channel underlies a pH-triggered membrane hyperpolarization during the process of sperm capacitation, as sperm encounter the alkaline environment near the ovum in the female reproductive tract, thereby playing an essential for male fertility. The polypeptide is Potassium channel subfamily U member 1 (Kcnu1) (Mus musculus (Mouse)).